The chain runs to 521 residues: FAD-dependent monooxygenase mdpD (521 aa).

Residues 1 to 48 (MTHFPVNIASDKQEFDPERWAKTPTTESSVNGENGTAPTSGLPSRHPS) form a disordered region. A compositionally biased stretch (basic and acidic residues) spans 11–21 (DKQEFDPERWA). Over residues 23-48 (TPTTESSVNGENGTAPTSGLPSRHPS) the composition is skewed to polar residues. Val-94 and Arg-160 together coordinate FAD. Catalysis depends on residues Arg-244 and Tyr-271. Residues Asp-369 and Gly-382 each contribute to the FAD site.

The protein belongs to the paxM FAD-dependent monooxygenase family. FAD serves as cofactor.

Its pathway is secondary metabolite biosynthesis. In terms of biological role, FAD-dependent monooxygenase; part of the gene cluster that mediates the biosynthesis of monodictyphenone, a prenyl xanthone derivative. The pathway begins with the synthesis of atrochrysone thioester by the polyketide synthase (PKS) mdpG. The atrochrysone carboxyl ACP thioesterase mdpF then breaks the thioester bond and releases the atrochrysone carboxylic acid from mdpG. The atrochrysone carboxylic acid is then converted to atrochrysone which is further transformed into emodin anthrone. The next step is performed by the anthrone oxygenase mdpH that catalyzes the oxidation of emodinanthrone to emodin. Emodin is further modified to yield monodictyphenone via several steps involving mdpB, mdpC mdpJ, mdpK and mdpL. These enzymes with xptA, xptB and xptC are also proposed to be involved in the synthesis of shamixanthone from emodin. Especially, direct reduction of emodin by the short chain dehydrogenase mdpC followed by dehydration catalyzed by the scytalone dehydratase-like protein mdpB gives loss of oxygen and formation of chrysophanol intermediate in two simple steps. The protein is FAD-dependent monooxygenase mdpD of Emericella nidulans (strain FGSC A4 / ATCC 38163 / CBS 112.46 / NRRL 194 / M139) (Aspergillus nidulans).